Reading from the N-terminus, the 365-residue chain is Ribosomal RNA large subunit methyltransferase F (365 aa).

The segment at 1–49 (MSKPAVKSVQSATAKTATRAVNIRQKVKAPKQAKPEAKGRVRPSKDKPR) is disordered. The span at 33 to 49 (AKPEAKGRVRPSKDKPR) shows a compositional bias: basic and acidic residues.

It belongs to the methyltransferase superfamily. METTL16/RlmF family.

It is found in the cytoplasm. It catalyses the reaction adenosine(1618) in 23S rRNA + S-adenosyl-L-methionine = N(6)-methyladenosine(1618) in 23S rRNA + S-adenosyl-L-homocysteine + H(+). Its function is as follows. Specifically methylates the adenine in position 1618 of 23S rRNA. In Shewanella baltica (strain OS185), this protein is Ribosomal RNA large subunit methyltransferase F.